The primary structure comprises 415 residues: Serine hydroxymethyltransferase (415 aa).

(6S)-5,6,7,8-tetrahydrofolate-binding positions include Leu-121 and 125–127; that span reads GHL. Residue Lys-230 is modified to N6-(pyridoxal phosphate)lysine.

This sequence belongs to the SHMT family. In terms of assembly, homodimer. Pyridoxal 5'-phosphate serves as cofactor.

Its subcellular location is the cytoplasm. It catalyses the reaction (6R)-5,10-methylene-5,6,7,8-tetrahydrofolate + glycine + H2O = (6S)-5,6,7,8-tetrahydrofolate + L-serine. It participates in one-carbon metabolism; tetrahydrofolate interconversion. Its pathway is amino-acid biosynthesis; glycine biosynthesis; glycine from L-serine: step 1/1. Functionally, catalyzes the reversible interconversion of serine and glycine with tetrahydrofolate (THF) serving as the one-carbon carrier. This reaction serves as the major source of one-carbon groups required for the biosynthesis of purines, thymidylate, methionine, and other important biomolecules. Also exhibits THF-independent aldolase activity toward beta-hydroxyamino acids, producing glycine and aldehydes, via a retro-aldol mechanism. This is Serine hydroxymethyltransferase from Syntrophomonas wolfei subsp. wolfei (strain DSM 2245B / Goettingen).